The primary structure comprises 486 residues: Cardiolipin synthase A (486 aa).

2 helical membrane-spanning segments follow: residues 3–23 (TVYT…IAGV) and 38–58 (MAWL…YLAV). PLD phosphodiesterase domains lie at 219–246 (MDLR…VDPR) and 399–426 (EGGL…DMRS). Catalysis depends on residues His224, Lys226, Asp231, His404, Lys406, and Asp411.

The protein belongs to the phospholipase D family. Cardiolipin synthase subfamily. ClsA sub-subfamily.

It localises to the cell inner membrane. The enzyme catalyses 2 a 1,2-diacyl-sn-glycero-3-phospho-(1'-sn-glycerol) = a cardiolipin + glycerol. Functionally, catalyzes the reversible phosphatidyl group transfer from one phosphatidylglycerol molecule to another to form cardiolipin (CL) (diphosphatidylglycerol) and glycerol. This is Cardiolipin synthase A from Shigella dysenteriae serotype 1 (strain Sd197).